Reading from the N-terminus, the 289-residue chain is MLKNLFRKTKYITVSQKNIENYKRENTPTIPDGMWVKCNKCGEILYQNDLEKNYMVCNLCGNHFRIGVKERIKYLFDKDTFKEWDYKIKTENPLDFKGYDEKIEHIKEKTNLSEAVTTGKGKIAGMEAVVCIMDSKFMMGSMGCVVGEKITRAIERAIKLRLPVIIFTASGGARMQEGILSLMQMAKVSSALAKLDEEGLLYICVLTDPTTGGVTASFAMLGDIILAEPDALIGFAGKRVIEQTINEKLPEDFQKSEFLLEHGFIDKIVPRSDLRKVLAKLINMHQNSF.

The CoA carboxyltransferase N-terminal domain maps to 34-289 (MWVKCNKCGE…KLINMHQNSF (256 aa)). Zn(2+) contacts are provided by Cys-38, Cys-41, Cys-57, and Cys-60. The segment at 38-60 (CNKCGEILYQNDLEKNYMVCNLC) adopts a C4-type zinc-finger fold.

Belongs to the AccD/PCCB family. As to quaternary structure, acetyl-CoA carboxylase is a heterohexamer composed of biotin carboxyl carrier protein (AccB), biotin carboxylase (AccC) and two subunits each of ACCase subunit alpha (AccA) and ACCase subunit beta (AccD). Zn(2+) is required as a cofactor.

The protein resides in the cytoplasm. The enzyme catalyses N(6)-carboxybiotinyl-L-lysyl-[protein] + acetyl-CoA = N(6)-biotinyl-L-lysyl-[protein] + malonyl-CoA. It participates in lipid metabolism; malonyl-CoA biosynthesis; malonyl-CoA from acetyl-CoA: step 1/1. Its function is as follows. Component of the acetyl coenzyme A carboxylase (ACC) complex. Biotin carboxylase (BC) catalyzes the carboxylation of biotin on its carrier protein (BCCP) and then the CO(2) group is transferred by the transcarboxylase to acetyl-CoA to form malonyl-CoA. The polypeptide is Acetyl-coenzyme A carboxylase carboxyl transferase subunit beta (Clostridium botulinum (strain Okra / Type B1)).